The following is a 522-amino-acid chain: Glutathione reductase, mitochondrial (522 aa).

The transit peptide at 1 to 43 (MALLPRALSAGAGPSWRRAARAFRGFLLLLPEPAALTRALSRA) directs the protein to the mitochondrion. Residues S74 and G75 each coordinate FAD. S74 provides a ligand contact to glutathione. A glutathione-binding site is contributed by R81. FAD is bound at residue E94. An N6-acetyllysine modification is found at K97. 3 residues coordinate FAD: T101, C102, and K110. C102 and C107 are joined by a disulfide. Y158 is a glutathione binding site. A174 contacts FAD. A239, I242, E245, R262, R268, and G334 together coordinate NADP(+). D375 contributes to the FAD binding site. An NADP(+)-binding site is contributed by L381. T383 lines the FAD pocket. R391 provides a ligand contact to glutathione. V414 serves as a coordination point for NADP(+). H511 is an FAD binding site. The Proton acceptor role is filled by H511.

The protein belongs to the class-I pyridine nucleotide-disulfide oxidoreductase family. Homodimer; disulfide-linked. It depends on FAD as a cofactor.

It is found in the mitochondrion. Its subcellular location is the cytoplasm. The catalysed reaction is 2 glutathione + NADP(+) = glutathione disulfide + NADPH + H(+). Its function is as follows. Catalyzes the reduction of glutathione disulfide (GSSG) to reduced glutathione (GSH). Constitutes the major mechanism to maintain a high GSH:GSSG ratio in the cytosol. The polypeptide is Glutathione reductase, mitochondrial (GSR) (Homo sapiens (Human)).